The following is a 557-amino-acid chain: Ubiquitin C-terminal hydrolase 22 (557 aa).

Residues 36–130 form a UBP-type; degenerate zinc finger; sequence FRCFNDARIK…VSKQLFGLGM (95 aa). Zn(2+) is bound by residues cysteine 56, cysteine 59, cysteine 69, cysteine 72, cysteine 77, histidine 80, histidine 84, and histidine 91. Residues 177-531 form the USP domain; that stretch reads RGLNNLGSTC…ECYMLFYAQE (355 aa). Cysteine 186 (nucleophile) is an active-site residue. Histidine 491 (proton acceptor) is an active-site residue.

Belongs to the peptidase C19 family. As to quaternary structure, component of a deubiquitination module (DUB module) formed by ENY2, SGF11, and UBP22 in Arabidopsis. Interacts directly with SGF11, but not with ENY2.

It localises to the nucleus. It is found in the nucleoplasm. It catalyses the reaction Thiol-dependent hydrolysis of ester, thioester, amide, peptide and isopeptide bonds formed by the C-terminal Gly of ubiquitin (a 76-residue protein attached to proteins as an intracellular targeting signal).. Functionally, component of a deubiquitination module (DUB module) that specifically deubiquinates monoubiquinated histone H2B (H2Bub). Does not seem to be a component of the TREX-2 complex. Seems to act independently of the SAGA multiprotein complex. The DUB module is responsible for the major H2Bub deubiquitinase activity in Arabidopsis. The polypeptide is Ubiquitin C-terminal hydrolase 22 (Arabidopsis thaliana (Mouse-ear cress)).